We begin with the raw amino-acid sequence, 75 residues long: Sec-independent protein translocase protein TatA (75 aa).

The helical transmembrane segment at 1–21 threads the bilayer; sequence MGSFSIWHWLIVLVIVALVFG. Residues 44 to 75 form a disordered region; sequence KDANSDKPAEQVTQQKVADDTIDVQAKEKTNS.

It belongs to the TatA/E family. As to quaternary structure, the Tat system comprises two distinct complexes: a TatABC complex, containing multiple copies of TatA, TatB and TatC subunits, and a separate TatA complex, containing only TatA subunits. Substrates initially bind to the TatABC complex, which probably triggers association of the separate TatA complex to form the active translocon.

The protein localises to the cell inner membrane. Functionally, part of the twin-arginine translocation (Tat) system that transports large folded proteins containing a characteristic twin-arginine motif in their signal peptide across membranes. TatA could form the protein-conducting channel of the Tat system. The chain is Sec-independent protein translocase protein TatA from Bordetella petrii (strain ATCC BAA-461 / DSM 12804 / CCUG 43448).